The following is a 68-amino-acid chain: Small ribosomal subunit protein bS21 (68 aa).

Belongs to the bacterial ribosomal protein bS21 family.

This chain is Small ribosomal subunit protein bS21, found in Dinoroseobacter shibae (strain DSM 16493 / NCIMB 14021 / DFL 12).